The chain runs to 129 residues: NADH-quinone oxidoreductase subunit A (129 aa).

3 helical membrane passes run 14–34 (LAIHVALSAGIVAAIIVVAAL), 67–87 (FLIAALFVIFDMEVAILFAWA), and 95–115 (WFGLIEAAVFIGVLLLALVYL).

Belongs to the complex I subunit 3 family. In terms of assembly, NDH-1 is composed of 14 different subunits. Subunits NuoA, H, J, K, L, M, N constitute the membrane sector of the complex.

It is found in the cell inner membrane. It catalyses the reaction a quinone + NADH + 5 H(+)(in) = a quinol + NAD(+) + 4 H(+)(out). NDH-1 shuttles electrons from NADH, via FMN and iron-sulfur (Fe-S) centers, to quinones in the respiratory chain. The immediate electron acceptor for the enzyme in this species is believed to be ubiquinone. Couples the redox reaction to proton translocation (for every two electrons transferred, four hydrogen ions are translocated across the cytoplasmic membrane), and thus conserves the redox energy in a proton gradient. This is NADH-quinone oxidoreductase subunit A from Rhodopseudomonas palustris (strain HaA2).